A 1358-amino-acid chain; its full sequence is MGKEAGAAESSTVVLAVNGKRYEAAGVAPSTSLLEFLRTQTPVRGPKLGCGEGGCGACVVLVSKYDPATDEVTEFSASSCLTLLHSVDRCSVTTSEGIGNTRDGYHPVQQRLSGFHASQCGFCTPGMCMSIFSALVKADNKSDRPDPPAGFSKITTSEAEKAVSGNLCRCTGYRPIVDTCKSFASDVDLEDLGLNCFWKKGEEPAEVSRLPGYNSGAVCTFPEFLKSEIKSTMKQVNDVPIAASGDGWYHPKSIEELHRLFDSSWFDDSSVKIVASNTGSGVYKDQDLYDKYIDIKGIPELSVINKNDKAIELGSVVSISKAIEVLSDGNLVFRKIADHLNKVASPFVRNTATIGGNIMMAQRLPFESDVATVLLAAGSTVTVQVASKRLCFTLEEFLEQPPCDSRTLLLSIFIPEWGSDYVTFETFRAAPRPFGNAVSYVNSAFLARTSGSLLIEDICLAFGAYGVDHAIRAKKVEDFLKGKSLSSFVILEAIKLLKDTVSPSEGTTHHEYRVSLAVSFLFSFLSSLANSSSAPSNIDTPNGSYTHETGSNVDSPERHIKVDSNDLPIRSRQEMVFSDEYKPVGKPIKKVGAEIQASGEAVYVDDIPAPKDCLYGAFIYSTHPHAHVRSINFKSSLASQKVITVITAKDIPSGGENIGSSFLMQGEALFADPIAEFAGQNIGVVIAETQRYANMAAKQAVVEYSTENLQPPILTIEDAIQRNSYIQIPPFLAPKPVGDYNKGMAEADHKILSAEVKLESQYYFYMETQAALAIPDEDNCITIYSSTQMPELTQNLIARCLGIPFHNVRVISRRVGGGFGGKAMKATHTACACALAAFKLRRPVRMYLDRKTDMIMAGGRHPMKAKYSVGFKSDGKITALHLDLGINAGISPDVSPLMPRAIIGALKKYNWGTLEFDTKVCKTNVSSKSAMRAPGDVQGSFIAEAIIEHVASALALDTNTVRRKNLHDFESLEVFYGESAGEASTYSLVSMFDKLALSPEYQHRAAMIEQFNSSNKWKKRGISCVPATYEVNLRPTPGKVSIMNDGSIAVEVGGIEIGQGLWTKVKQMTAFGLGQLCPDGGECLLDKVRVIQADTLSLIQGGMTAGSTTSETSCETVRQSCVALVEKLNPIKESLEAKSNTVEWSALIAQASMASVNLSAQPYWTPDPSFKSYLNYGAGTSEVEVDILTGATTILRSDLVYDCGQSLNPAVDLGQIEGCFVQGIGFFTNEDYKTNSDGLVIHDGTWTYKIPTVDNIPKEFNVEMFNSAPDKKRVLSSKASGEPPLVLATSVHCAMREAIRAARKEFSVSTSPAKSAVTFQMDVPATMPVVKELCGLDVVERYLENVSAASAGPNTAKA.

In terms of domain architecture, 2Fe-2S ferredoxin-type spans 11–98; the sequence is STVVLAVNGK…RCSVTTSEGI (88 aa). [2Fe-2S] cluster is bound by residues cysteine 50, cysteine 55, and cysteine 58. In terms of domain architecture, FAD-binding PCMH-type spans 241 to 419; that stretch reads IAASGDGWYH…LSIFIPEWGS (179 aa). A disordered region spans residues 532–559; sequence SSAPSNIDTPNGSYTHETGSNVDSPERH. The span at 537–554 shows a compositional bias: polar residues; that stretch reads NIDTPNGSYTHETGSNVD.

It belongs to the xanthine dehydrogenase family. Aldehyde oxidases (AO) are homodimers and heterodimers of AO subunits. [2Fe-2S] cluster is required as a cofactor. FAD serves as cofactor. Requires Mo-molybdopterin as cofactor. As to expression, mostly expressed in roots, and, to a lower extent, in mesocotyl, leaves and coleoptile. Accumulates in apical region of maize coleoptiles (at protein level).

The protein resides in the cytoplasm. It catalyses the reaction indole-3-acetaldehyde + O2 + H2O = (indol-3-yl)acetate + H2O2 + H(+). Inhibited by 2-mercaptoethanol, p-chloromercuribenzoate, and iodoacetate. Functionally, in higher plants aldehyde oxidases (AO) appear to be homo- and heterodimeric assemblies of AO subunits with probably different physiological functions. Involved in the biosynthesis of auxin from (indol-3-yl)acetaldehyde. Can also use indole-3-aldehyde and benzaldehyde as substrate. The chain is Indole-3-acetaldehyde oxidase (AO1) from Zea mays (Maize).